The chain runs to 249 residues: Chitooligosaccharide deacetylase (249 aa).

Positions 61 and 125 each coordinate Mg(2+).

This sequence belongs to the YdjC deacetylase family. ChbG subfamily. As to quaternary structure, homodimer. Requires Mg(2+) as cofactor.

It is found in the cytoplasm. The catalysed reaction is N,N'-diacetylchitobiose + H2O = N-acetyl-beta-D-glucosaminyl-(1-&gt;4)-D-glucosamine + acetate. The enzyme catalyses diacetylchitobiose-6'-phosphate + H2O = N'-monoacetylchitobiose-6'-phosphate + acetate. Its pathway is glycan degradation; chitin degradation. Its function is as follows. Involved in the degradation of chitin. ChbG is essential for growth on the acetylated chitooligosaccharides chitobiose and chitotriose but is dispensable for growth on cellobiose and chitosan dimer, the deacetylated form of chitobiose. Deacetylation of chitobiose-6-P and chitotriose-6-P is necessary for both the activation of the chb promoter by the regulatory protein ChbR and the hydrolysis of phosphorylated beta-glucosides by the phospho-beta-glucosidase ChbF. Catalyzes the removal of only one acetyl group from chitobiose-6-P to yield monoacetylchitobiose-6-P, the inducer of ChbR and the substrate of ChbF. The chain is Chitooligosaccharide deacetylase from Escherichia coli (strain K12 / MC4100 / BW2952).